A 125-amino-acid polypeptide reads, in one-letter code: Large ribosomal subunit protein bL12 (125 aa).

This sequence belongs to the bacterial ribosomal protein bL12 family. In terms of assembly, homodimer. Part of the ribosomal stalk of the 50S ribosomal subunit. Forms a multimeric L10(L12)X complex, where L10 forms an elongated spine to which 2 to 4 L12 dimers bind in a sequential fashion. Binds GTP-bound translation factors.

Forms part of the ribosomal stalk which helps the ribosome interact with GTP-bound translation factors. Is thus essential for accurate translation. This is Large ribosomal subunit protein bL12 from Dictyoglomus thermophilum (strain ATCC 35947 / DSM 3960 / H-6-12).